The following is a 472-amino-acid chain: Trigger factor (472 aa).

Residues 174–261 form the PPIase FKBP-type domain; the sequence is GDIALVSFKG…LEDLKIKELP (88 aa). Positions 438-472 are disordered; the sequence is EKTPEKARDQIKEKSSKKKTTKTNKEKKSSKTPKS. A compositionally biased stretch (basic and acidic residues) spans 439–451; that stretch reads KTPEKARDQIKEK.

It belongs to the FKBP-type PPIase family. Tig subfamily.

It is found in the cytoplasm. It carries out the reaction [protein]-peptidylproline (omega=180) = [protein]-peptidylproline (omega=0). In terms of biological role, involved in protein export. Acts as a chaperone by maintaining the newly synthesized protein in an open conformation. Functions as a peptidyl-prolyl cis-trans isomerase. This is Trigger factor from Prochlorococcus marinus (strain NATL2A).